Consider the following 196-residue polypeptide: Bcl-2-like protein 11 (196 aa).

Residues 1 to 68 form a disordered region; it reads MAKQPSDVNS…PLAPPASPGP (68 aa). Residues 34–43 are compositionally biased toward polar residues; the sequence is TSLQTESQGN. Ser65 is subject to Phosphoserine; by MAPK. Phosphoserine is present on residues Ser73, Ser83, and Ser90. Residues 90 to 114 are disordered; that stretch reads SGYFSFDTDRSPAPMSCDKSTQTPS. A BH3 motif is present at residues 146-160; it reads IAQELRRIGDEFNET.

This sequence belongs to the Bcl-2 family. In terms of assembly, forms heterodimers with a number of antiapoptotic Bcl-2 proteins, including MCL1, BCL2, BCL2L1 isoform Bcl-X(L), BCL2A1/BFL-1, and BCL2L2/BCLW. Does not heterodimerize with proapoptotic proteins such as BAD, BOK or BAK. Identified in a complex containing BCL2L11, DYNLL1 and BCL2L1 isoform Bcl-X(L); BH3 integrity is required for BCL2L1-binding. Interacts with YWHAZ. When phosphorylated, interacts with TRIM2; this interaction is associated with ubiquitination and degradation. Interacts (via BH3) with MCL1; this interaction may sequester BCL2L11 and prevent its pro-apoptotic activity. When phosphorylated, isoform BimEL interacts with USP27X; this interaction leads to BCL2L11 deubiquitination and stabilization. Interacts with GIMAP5. Interacts with BCL2L10/BCL-B. Post-translationally, phosphorylation at Ser-65 by MAPK1/MAPK3 leads interaction with TRIM2 and ubiquitination, followed by proteasomal degradation. Deubiquitination catalyzed by USP27X stabilizes the protein. In terms of processing, ubiquitination by TRIM2 following phosphorylation by MAPK1/MAPK3 leads to proteasomal degradation. Conversely, deubiquitination catalyzed by USP27X stabilizes the protein. In terms of tissue distribution, widely expressed.

It localises to the membrane. Its subcellular location is the mitochondrion. In terms of biological role, induces apoptosis and anoikis. The sequence is that of Bcl-2-like protein 11 (Bcl2l11) from Rattus norvegicus (Rat).